The sequence spans 41 residues: uncharacterized protein (41 aa).

Residues 8–28 (IKKIAMFFLGILVGVFIVLFF) form a helical membrane-spanning segment.

It is found in the membrane. This is an uncharacterized protein from Streptococcus pneumoniae serotype 2 (strain D39 / NCTC 7466).